A 432-amino-acid chain; its full sequence is G-protein coupled receptor 22 (432 aa).

The Extracellular segment spans residues 1-45 (MCFSPVLEINMQSESNVTVRDDIDDIDTNMYQPLSYPLSFQVSLT). N-linked (GlcNAc...) asparagine glycosylation is present at Asn-16. A helical membrane pass occupies residues 46–66 (GFLMLEIVLGLGSNLTVLVLY). The Cytoplasmic portion of the chain corresponds to 67–85 (CMKSNLINSVSNIITMNLH). A helical transmembrane segment spans residues 86–106 (VLDVIICVGCIPLTIVILLLS). Over 107–115 (LESNTALIC) the chain is Extracellular. The chain crosses the membrane as a helical span at residues 116–136 (CFHEACVSFASVSTAINVFAI). Topologically, residues 137–156 (TLDRYDISVKPANRILTMGR) are cytoplasmic. A helical transmembrane segment spans residues 157–177 (AVMLMTSIWIFSFFSFLIPFI). The Extracellular portion of the chain corresponds to 178–208 (EVNFFSLQSGNTWANKTLLCVSTSEYYTELG). Asn-192 carries an N-linked (GlcNAc...) asparagine glycan. Residues 209 to 229 (MYYHLLVQIPIFFFTVIVMLI) form a helical membrane-spanning segment. Residues 230–314 (TYTKILQALN…ERQKRVFKMS (85 aa)) lie on the Cytoplasmic side of the membrane. The chain crosses the membrane as a helical span at residues 315–335 (LLIISTFLLCWTPISVLNTTI). Residues 336–348 (LCLGPSDLLVKLR) are Extracellular-facing. A helical transmembrane segment spans residues 349-369 (LCFLVMAYGTTIFHPLLYAFT). At 370–432 (RQKFQKVLKS…KCLVPQVVTD (63 aa)) the chain is on the cytoplasmic side.

Belongs to the G-protein coupled receptor 1 family. In terms of tissue distribution, abundant levels detected in the brain and heart and no detectable expression in other peripheral tissues.

Its subcellular location is the cell membrane. Orphan G-protein coupled receptor. Seems to act through a G(i)/G(o) mediated pathway. May be involved in ciliogenesis. The chain is G-protein coupled receptor 22 (Gpr22) from Mus musculus (Mouse).